The sequence spans 757 residues: Maltose phosphorylase (757 aa).

Residue W354 to D355 coordinates substrate. E483 (proton donor) is an active-site residue. K588–Q589 provides a ligand contact to substrate.

This sequence belongs to the glycosyl hydrolase 65 family.

The catalysed reaction is D-maltose + phosphate = beta-D-glucose 1-phosphate + D-glucose. It functions in the pathway glycan degradation; maltose degradation. Catalyzes the phosphorolysis of maltose, leading to the formation of glucose and glucose 1-P. The protein is Maltose phosphorylase (mdxK) of Bacillus subtilis (strain 168).